A 295-amino-acid chain; its full sequence is Fructose-bisphosphate aldolase class 1 (295 aa).

Glu176 functions as the Proton acceptor in the catalytic mechanism. Lys213 (schiff-base intermediate with dihydroxyacetone-P) is an active-site residue.

This sequence belongs to the class I fructose-bisphosphate aldolase family.

The catalysed reaction is beta-D-fructose 1,6-bisphosphate = D-glyceraldehyde 3-phosphate + dihydroxyacetone phosphate. It functions in the pathway carbohydrate degradation; glycolysis; D-glyceraldehyde 3-phosphate and glycerone phosphate from D-glucose: step 4/4. In Treponema denticola (strain ATCC 35405 / DSM 14222 / CIP 103919 / JCM 8153 / KCTC 15104), this protein is Fructose-bisphosphate aldolase class 1.